A 1499-amino-acid chain; its full sequence is Ubiquitinating/deubiquitinating enzyme SdeA (1499 aa).

Positions 1–193 are deubiquitinase; the sequence is MPKYVEGVEL…GKALRENTEK (193 aa). Active-site for deubiquitinase activity residues include His-64 and Asp-80. The active-site Nucleophile; for deubiquitinase activity is Cys-118. The segment at 760-1000 is mono-ADP-ribosyltransferase; the sequence is PPTRLFRGLN…KALAAFPSDT (241 aa). Residue 766-772 coordinates NAD(+); the sequence is RGLNLSE. Glu-860 is modified (5-glutamyl glutamate). Glu-862 is an NAD(+) binding site. Residues 1059–1181 adopt a coiled-coil conformation; the sequence is KEMGTIRREL…IDTKLADAYL (123 aa).

The protein belongs to the SidE family. Interacts with IcmS. Is able to ubiquitinate itself, but this modification is not required to ubiquitinate Rab33b. Post-translationally, glutamylated at Glu-860 by SidJ; glutamylation inhibits SdeA activity to catalyze the production of ADP-ribosylated ubiquitin.

Its subcellular location is the secreted. It is found in the host cell. The enzyme catalyses L-arginyl-[protein] + NAD(+) = N(omega)-(ADP-D-ribosyl)-L-arginyl-[protein] + nicotinamide + H(+). Its activity is regulated as follows. Ubiquitination catalyzed by SdeA is insensitive to the cysteine alkylation agent maleimide, suggesting that a cysteine conjugation of ubiquitin does not form during the reaction. Its function is as follows. Secreted effector that interferes with the host cell ubiquitin pathway and is required for intracellular bacterial replication. Catalyzes the ubiquitination of several mammalian Rab proteins (Rab33b, Rab1, Rab6a and Rab30) during L.pneumophila infection, without engaging the standard cellular enzyme cascade (E1 and E2). Transfers an ADP-ribose moiety from NAD to the 'Arg-42' residue of ubiquitin in a reaction that releases nicotinamide. The modified ubiquitin is subsequently transferred to serine residues of the substrate protein via a phosphoribose linker that results in the release of AMP. Cannot ubiquitinate the endosomal Rab5 or the cytoskeletal small GTPase Rac1. Also acts as a deubiquitinase (DUB), catalyzing the cleavage of three of the most abundant polyubiquitin chains ('Lys-11', 'Lys-48' and 'Lys-63') with a distinct preference for 'Lys-63' linkages; is thus able to efficiently remove 'Lys-63'-linked polyubiquitin chains from the phagosomal surface. Is also able to remove NEDD8 from neddylated proteins, but is unable to recognize SUMO. The DUB activity of SdeA is important for regulating the dynamics of ubiquitin association with the bacterial phagosome, but is dispensable for its role in intracellular bacterial replication. The polypeptide is Ubiquitinating/deubiquitinating enzyme SdeA (Legionella pneumophila subsp. pneumophila (strain Philadelphia 1 / ATCC 33152 / DSM 7513)).